The sequence spans 480 residues: Glutamate--tRNA ligase (480 aa).

The 'HIGH' region signature appears at 21–31; it reads PSPTGYLHVGG. Zn(2+) is bound by residues Cys-110, Cys-112, Cys-137, and His-139. The short motif at 248–252 is the 'KMSKS' region element; it reads KLSKR. Lys-251 is a binding site for ATP.

The protein belongs to the class-I aminoacyl-tRNA synthetase family. Glutamate--tRNA ligase type 1 subfamily. In terms of assembly, monomer. Requires Zn(2+) as cofactor.

The protein localises to the cytoplasm. The enzyme catalyses tRNA(Glu) + L-glutamate + ATP = L-glutamyl-tRNA(Glu) + AMP + diphosphate. Functionally, catalyzes the attachment of glutamate to tRNA(Glu) in a two-step reaction: glutamate is first activated by ATP to form Glu-AMP and then transferred to the acceptor end of tRNA(Glu). The protein is Glutamate--tRNA ligase of Actinobacillus succinogenes (strain ATCC 55618 / DSM 22257 / CCUG 43843 / 130Z).